The chain runs to 98 residues: Small ribosomal subunit protein bS20 (98 aa).

This sequence belongs to the bacterial ribosomal protein bS20 family.

Its function is as follows. Binds directly to 16S ribosomal RNA. This is Small ribosomal subunit protein bS20 from Parasynechococcus marenigrum (strain WH8102).